The following is a 578-amino-acid chain: Arginine--tRNA ligase (578 aa).

The 'HIGH' region signature appears at Pro123–His133.

It belongs to the class-I aminoacyl-tRNA synthetase family. In terms of assembly, monomer.

It is found in the cytoplasm. The enzyme catalyses tRNA(Arg) + L-arginine + ATP = L-arginyl-tRNA(Arg) + AMP + diphosphate. In Baumannia cicadellinicola subsp. Homalodisca coagulata, this protein is Arginine--tRNA ligase.